The chain runs to 289 residues: Protease HtpX (289 aa).

2 consecutive transmembrane segments (helical) span residues 7-27 and 38-58; these read LFLLTNLAITFVLGIVLNIIF and GGILVMSLVFGFAGSLISLFM. H144 is a Zn(2+) binding site. E145 is a catalytic residue. H148 is a binding site for Zn(2+). 2 helical membrane passes run 155–175 and 194–214; these read VTMTLLQGVLNTFVIFLSRII and LVFWIVDIALQMIFGVIATMI. E223 contributes to the Zn(2+) binding site.

Belongs to the peptidase M48B family. Zn(2+) is required as a cofactor.

It is found in the cell inner membrane. In Actinobacillus pleuropneumoniae serotype 5b (strain L20), this protein is Protease HtpX.